Reading from the N-terminus, the 297-residue chain is Streptogrisin-A (297 aa).

Positions 1–38 (MTFKRFSPLSSTSRYARLLAVASGLVAAAALATPSAVA) are cleaved as a signal peptide. The propeptide occupies 39-115 (APEAESKATV…VKRAEGKFTP (77 aa)). Cysteine 130 and cysteine 150 are disulfide-bonded. Catalysis depends on charge relay system residues histidine 149, aspartate 171, and serine 253. Cysteine 247 and cysteine 274 are disulfide-bonded.

Belongs to the peptidase S1 family. In terms of assembly, monomer.

The catalysed reaction is Hydrolysis of proteins with specificity similar to chymotrypsin.. Its function is as follows. Has a primary specificity for large aliphatic or aromatic amino acids. This is Streptogrisin-A (sprA) from Streptomyces griseus.